The primary structure comprises 180 residues: Shikimate kinase (180 aa).

14–19 (GAGKSS) lines the ATP pocket. S18 serves as a coordination point for Mg(2+). The substrate site is built by D36, R60, and G82. R120 provides a ligand contact to ATP. R139 contacts substrate.

Belongs to the shikimate kinase family. In terms of assembly, monomer. Mg(2+) serves as cofactor.

The protein localises to the cytoplasm. It catalyses the reaction shikimate + ATP = 3-phosphoshikimate + ADP + H(+). It functions in the pathway metabolic intermediate biosynthesis; chorismate biosynthesis; chorismate from D-erythrose 4-phosphate and phosphoenolpyruvate: step 5/7. Functionally, catalyzes the specific phosphorylation of the 3-hydroxyl group of shikimic acid using ATP as a cosubstrate. This chain is Shikimate kinase, found in Xylella fastidiosa (strain M12).